A 547-amino-acid polypeptide reads, in one-letter code: Pyochelin synthase PchD (547 aa).

Belongs to the ATP-dependent AMP-binding enzyme family.

The enzyme catalyses salicylate + holo-[ACP] + ATP = salicyl-[ACP] + AMP + diphosphate. It functions in the pathway siderophore biosynthesis. Its pathway is antifungal biosynthesis. Its function is as follows. Involved in the biosynthesis of the siderophore pyochelin. Specifically adenylates salicylate and loads it onto the holo form of PchE via a thioester linkage to the phosphopanthetheine moiety. Is also involved in the synthesis of the antifungal antibiotic dihydroaeruginoic acid (Dha or hydroxyphenyl-thiazolinyl-carboxylate), a precursor of pyochelin. This chain is Pyochelin synthase PchD, found in Pseudomonas aeruginosa (strain UCBPP-PA14).